The sequence spans 419 residues: UDP-N-acetylglucosamine 1-carboxyvinyltransferase (419 aa).

22 to 23 (KN) is a phosphoenolpyruvate binding site. Arginine 93 provides a ligand contact to UDP-N-acetyl-alpha-D-glucosamine. Cysteine 117 acts as the Proton donor in catalysis. The residue at position 117 (cysteine 117) is a 2-(S-cysteinyl)pyruvic acid O-phosphothioketal. Residues aspartate 307 and isoleucine 329 each contribute to the UDP-N-acetyl-alpha-D-glucosamine site.

This sequence belongs to the EPSP synthase family. MurA subfamily.

It localises to the cytoplasm. The enzyme catalyses phosphoenolpyruvate + UDP-N-acetyl-alpha-D-glucosamine = UDP-N-acetyl-3-O-(1-carboxyvinyl)-alpha-D-glucosamine + phosphate. It participates in cell wall biogenesis; peptidoglycan biosynthesis. Functionally, cell wall formation. Adds enolpyruvyl to UDP-N-acetylglucosamine. In Shewanella sp. (strain ANA-3), this protein is UDP-N-acetylglucosamine 1-carboxyvinyltransferase.